We begin with the raw amino-acid sequence, 1303 residues long: Alpha,alpha-trehalose-phosphate synthase [UDP-forming] 2 (1303 aa).

2 disordered regions span residues 1–48 (MTVV…NNTT) and 205–251 (LQRR…FRGK). Residues 212–221 (SSRGGSLRGS) are compositionally biased toward low complexity.

This sequence in the N-terminal section; belongs to the glycosyltransferase 20 family. The protein in the C-terminal section; belongs to the gob-1 trehalose phosphatase family.

It carries out the reaction D-glucose 6-phosphate + UDP-alpha-D-glucose = alpha,alpha-trehalose 6-phosphate + UDP + H(+). In terms of biological role, catalyzes the production of trehalose from glucose-6-phosphate and UDP-alpha-D-glucose in a 2 step process. In Aphelenchoides avenae (Mycophagous nematode worm), this protein is Alpha,alpha-trehalose-phosphate synthase [UDP-forming] 2 (tps-2).